Consider the following 271-residue polypeptide: Ribosomal RNA small subunit methyltransferase A (271 aa).

Positions 28, 30, 54, 75, 99, and 117 each coordinate S-adenosyl-L-methionine.

Belongs to the class I-like SAM-binding methyltransferase superfamily. rRNA adenine N(6)-methyltransferase family. RsmA subfamily.

The protein resides in the cytoplasm. The enzyme catalyses adenosine(1518)/adenosine(1519) in 16S rRNA + 4 S-adenosyl-L-methionine = N(6)-dimethyladenosine(1518)/N(6)-dimethyladenosine(1519) in 16S rRNA + 4 S-adenosyl-L-homocysteine + 4 H(+). In terms of biological role, specifically dimethylates two adjacent adenosines (A1518 and A1519) in the loop of a conserved hairpin near the 3'-end of 16S rRNA in the 30S particle. May play a critical role in biogenesis of 30S subunits. The chain is Ribosomal RNA small subunit methyltransferase A from Thermus thermophilus (strain ATCC 27634 / DSM 579 / HB8).